Reading from the N-terminus, the 284-residue chain is Bifunctional protein FolD (284 aa).

NADP(+) is bound by residues 164–166 (GRG), T189, and I230.

This sequence belongs to the tetrahydrofolate dehydrogenase/cyclohydrolase family. As to quaternary structure, homodimer.

It catalyses the reaction (6R)-5,10-methylene-5,6,7,8-tetrahydrofolate + NADP(+) = (6R)-5,10-methenyltetrahydrofolate + NADPH. It carries out the reaction (6R)-5,10-methenyltetrahydrofolate + H2O = (6R)-10-formyltetrahydrofolate + H(+). Its pathway is one-carbon metabolism; tetrahydrofolate interconversion. Catalyzes the oxidation of 5,10-methylenetetrahydrofolate to 5,10-methenyltetrahydrofolate and then the hydrolysis of 5,10-methenyltetrahydrofolate to 10-formyltetrahydrofolate. This Pelotomaculum thermopropionicum (strain DSM 13744 / JCM 10971 / SI) protein is Bifunctional protein FolD.